Here is a 209-residue protein sequence, read N- to C-terminus: B3 domain-containing protein At2g31420 (209 aa).

The segment at residues 101 to 198 is a DNA-binding region (TF-B3); that stretch reads LSKLEKSDFL…KLCFALSSPT (98 aa).

The protein localises to the nucleus. This is B3 domain-containing protein At2g31420 from Arabidopsis thaliana (Mouse-ear cress).